Consider the following 429-residue polypeptide: Ribosomal RNA small subunit methyltransferase B (429 aa).

S-adenosyl-L-methionine is bound by residues 254–260 (CAAPGGK), aspartate 277, aspartate 303, and aspartate 322. Catalysis depends on cysteine 375, which acts as the Nucleophile.

It belongs to the class I-like SAM-binding methyltransferase superfamily. RsmB/NOP family.

It localises to the cytoplasm. The enzyme catalyses cytidine(967) in 16S rRNA + S-adenosyl-L-methionine = 5-methylcytidine(967) in 16S rRNA + S-adenosyl-L-homocysteine + H(+). Specifically methylates the cytosine at position 967 (m5C967) of 16S rRNA. This is Ribosomal RNA small subunit methyltransferase B from Cronobacter sakazakii (strain ATCC BAA-894) (Enterobacter sakazakii).